A 70-amino-acid chain; its full sequence is Small ribosomal subunit protein bS21 (70 aa).

The protein belongs to the bacterial ribosomal protein bS21 family.

The polypeptide is Small ribosomal subunit protein bS21 (Bordetella avium (strain 197N)).